Consider the following 287-residue polypeptide: Ribosomal RNA small subunit methyltransferase I (287 aa).

The protein belongs to the methyltransferase superfamily. RsmI family.

Its subcellular location is the cytoplasm. It carries out the reaction cytidine(1402) in 16S rRNA + S-adenosyl-L-methionine = 2'-O-methylcytidine(1402) in 16S rRNA + S-adenosyl-L-homocysteine + H(+). Catalyzes the 2'-O-methylation of the ribose of cytidine 1402 (C1402) in 16S rRNA. The sequence is that of Ribosomal RNA small subunit methyltransferase I from Helicobacter pylori (strain ATCC 700392 / 26695) (Campylobacter pylori).